The following is a 778-amino-acid chain: Ent-trachylobane synthase KSL2, chloroplastic (778 aa).

Residues 1-37 (MLLTCTNSLKISSQAKEWESKTLTGMSLEQLNKRIRI) constitute a chloroplast transit peptide. Mg(2+)-binding residues include aspartate 529, aspartate 533, asparagine 672, aspartate 673, and aspartate 680. Residues 529-533 (DDFFD) carry the DDXXD motif motif.

The protein belongs to the terpene synthase family. It depends on Mg(2+) as a cofactor.

The protein resides in the plastid. Its subcellular location is the chloroplast. It carries out the reaction ent-copalyl diphosphate = ent-trachylobane + diphosphate. It catalyses the reaction ent-copalyl diphosphate = ent-kaur-16-ene + diphosphate. It participates in secondary metabolite biosynthesis; terpenoid biosynthesis. In terms of biological role, diterpene cyclase involved in the biosynthesis of labdane-related diterpenoids (LRDs) natural products. Catalyzes the cyclization of ent-CDP into ent-trachylobane as a major and ent-kaurene as a minor product. The polypeptide is Ent-trachylobane synthase KSL2, chloroplastic (Ricinus communis (Castor bean)).